A 513-amino-acid chain; its full sequence is L-threonine dehydratase biosynthetic IlvA (513 aa).

Lys63 is subject to N6-(pyridoxal phosphate)lysine. Residues Asn90, 189-193 (GGGGL), and Ser316 contribute to the pyridoxal 5'-phosphate site. ACT-like domains follow at residues 340-411 (ALLA…DMSD) and 433-504 (RLYT…DVTK).

Belongs to the serine/threonine dehydratase family. As to quaternary structure, homotetramer. The cofactor is pyridoxal 5'-phosphate.

It carries out the reaction L-threonine = 2-oxobutanoate + NH4(+). The protein operates within amino-acid biosynthesis; L-isoleucine biosynthesis; 2-oxobutanoate from L-threonine: step 1/1. Catalyzes the anaerobic formation of alpha-ketobutyrate and ammonia from threonine in a two-step reaction. The first step involved a dehydration of threonine and a production of enamine intermediates (aminocrotonate), which tautomerizes to its imine form (iminobutyrate). Both intermediates are unstable and short-lived. The second step is the nonenzymatic hydrolysis of the enamine/imine intermediates to form 2-ketobutyrate and free ammonia. In the low water environment of the cell, the second step is accelerated by RidA. The chain is L-threonine dehydratase biosynthetic IlvA (ilvA) from Haemophilus influenzae (strain ATCC 51907 / DSM 11121 / KW20 / Rd).